A 236-amino-acid chain; its full sequence is Large ribosomal subunit protein uL2 (236 aa).

A disordered region spans residues 198–236; sequence DHPFGGGGRQHPGRPKTVSRGTPPGRKVGSIAARRTGKR.

Belongs to the universal ribosomal protein uL2 family. Part of the 50S ribosomal subunit. Forms a bridge to the 30S subunit in the 70S ribosome.

One of the primary rRNA binding proteins. Required for association of the 30S and 50S subunits to form the 70S ribosome, for tRNA binding and peptide bond formation. It has been suggested to have peptidyltransferase activity; this is somewhat controversial. Makes several contacts with the 16S rRNA in the 70S ribosome. The protein is Large ribosomal subunit protein uL2 of Methanothrix thermoacetophila (strain DSM 6194 / JCM 14653 / NBRC 101360 / PT) (Methanosaeta thermophila).